A 293-amino-acid chain; its full sequence is Small ribosomal subunit protein uS2 (293 aa).

The tract at residues Ile-219–Ala-293 is disordered.

The protein belongs to the universal ribosomal protein uS2 family. As to quaternary structure, component of the small ribosomal subunit. Mature ribosomes consist of a small (40S) and a large (60S) subunit. The 40S subunit contains about 33 different proteins and 1 molecule of RNA (18S). The 60S subunit contains about 49 different proteins and 3 molecules of RNA (28S, 5.8S and 5S). Interacts with ribosomal protein S21.

It localises to the cytoplasm. Its function is as follows. Required for the assembly and/or stability of the 40S ribosomal subunit. Required for the processing of the 20S rRNA-precursor to mature 18S rRNA in a late step of the maturation of 40S ribosomal subunits. The chain is Small ribosomal subunit protein uS2 from Hydra viridissima (Green hydra).